An 84-amino-acid chain; its full sequence is Kappa-scoloptoxin(11)-Ssm3a (84 aa).

The signal sequence occupies residues 1-16 (MSWMFYSFIVFTLAIK).

Belongs to the scoloptoxin-11 family. Contains 2 disulfide bonds. In terms of tissue distribution, expressed by the venom gland.

It localises to the secreted. Inhibits voltage-gated potassium channel currents in DRG neurons. 200 nM of the toxin inhibits current amplitude by only 25% and even at concentrations up to 5 uM, the toxin does not inhibit all potassium currents. In vivo, insects injected with this toxin showed signs of neurotoxicity including twitching, paralysis, and body contraction. In Scolopendra mutilans (Chinese red-headed centipede), this protein is Kappa-scoloptoxin(11)-Ssm3a.